The chain runs to 503 residues: Excitatory amino acid transporter (503 aa).

Residues 1–18 (MPPDTRINKEIMVSWIRK) lie on the Cytoplasmic side of the membrane. A run of 3 helical transmembrane segments spans residues 19–39 (NLLL…GFLL), 59–79 (LMHM…ISGL), and 96–116 (TYYM…VLVI). The Extracellular segment spans residues 117 to 198 (HPGDPTIKKE…SLDYVKASVE (82 aa)). 2 N-linked (GlcNAc...) asparagine glycosylation sites follow: Asn177 and Asn187. 5 consecutive transmembrane segments (helical) span residues 199-219 (YTSG…GISL), 239-259 (VIMK…FCLI), 281-301 (VTVL…IFFV), 369-389 (AVAA…GQVV), and 400-420 (IGAA…LTAV).

This sequence belongs to the dicarboxylate/amino acid:cation symporter (DAACS) (TC 2.A.23) family.

It localises to the membrane. Transports L-glutamate and also L- and D-aspartate. Essential for terminating the postsynaptic action of glutamate by rapidly removing released glutamate from the synaptic cleft. Acts as a symport by cotransporting sodium. This chain is Excitatory amino acid transporter (glt-1), found in Caenorhabditis elegans.